We begin with the raw amino-acid sequence, 2184 residues long: Chromodomain-helicase-DNA-binding protein 8 (2184 aa).

Disordered regions lie at residues 379 to 399 and 419 to 527; these read VKTSTGGGESRKLDSQKKQEK and IPRV…KRKK. Positions 387 to 399 are enriched in basic and acidic residues; it reads ESRKLDSQKKQEK. Acidic residues predominate over residues 425–437; it reads EDELPSVNPEDDD. Positions 448–459 are enriched in basic and acidic residues; the sequence is GETSDRSKDEKP. Basic residues predominate over residues 516-527; that stretch reads KRRSNRQVKRKK. Chromo domains lie at 586–653 and 668–734; these read AIVD…TQMQ and VEVD…RVAR. The region spanning 767-941 is the Helicase ATP-binding domain; it reads LFNWYNRQNC…FSLLHFLEPT (175 aa). An ATP-binding site is contributed by 780 to 787; the sequence is DEMGLGKT. Positions 892 to 895 match the DEAH box motif; it reads DEAH. The Helicase C-terminal domain maps to 1081–1252; sequence LIDKLLPKLR…FTKKEIEDLL (172 aa). Disordered regions lie at residues 1907–1989 and 2039–2076; these read GISG…EESR and WSSPRRLSDPPSDSPDSLPPTPEQQSPAHFTQIRPAPD. Composition is skewed to low complexity over residues 1912–1961 and 2040–2054; these read SRPS…SNSE and SSPRRLSDPPSDSPD.

It belongs to the SNF2/RAD54 helicase family. CHD8 subfamily. As to quaternary structure, component of some MLL1/MLL complex.

Its subcellular location is the nucleus. It catalyses the reaction ATP + H2O = ADP + phosphate + H(+). In terms of biological role, ATP-dependent chromatin-remodeling factor, it slides nucleosomes along DNA; nucleosome sliding requires ATP. Acts as a transcription repressor by remodeling chromatin structure and recruiting histone H1 to target genes. Suppresses p53/tp53-mediated apoptosis by recruiting histone H1 and preventing p53/tp53 transactivation activity. Acts as a negative regulator of Wnt signaling pathway by regulating beta-catenin (ctnnb1) activity. Negatively regulates ctnnb1-targeted gene expression by being recruited specifically to the promoter regions of several ctnnb1 responsive genes. May also act as a transcription activator by participating in efficient U6 RNA polymerase III transcription. The protein is Chromodomain-helicase-DNA-binding protein 8 of Xenopus tropicalis (Western clawed frog).